The primary structure comprises 194 residues: Holliday junction branch migration complex subunit RuvA (194 aa).

The interval 1–64 is domain I; sequence MISRLTGKLV…EDAHLLFGFA (64 aa). Positions 65–143 are domain II; the sequence is TAEERKTFRQ…AHTVTDGLFA (79 aa). The segment at 144–147 is flexible linker; it reads AAPA. Residues 147–194 form a domain III region; sequence AADETEDIVSTLLALGYSEREAKAAVKGVPEGTDVGEGVRLALKNLLK.

It belongs to the RuvA family. In terms of assembly, homotetramer. Forms an RuvA(8)-RuvB(12)-Holliday junction (HJ) complex. HJ DNA is sandwiched between 2 RuvA tetramers; dsDNA enters through RuvA and exits via RuvB. An RuvB hexamer assembles on each DNA strand where it exits the tetramer. Each RuvB hexamer is contacted by two RuvA subunits (via domain III) on 2 adjacent RuvB subunits; this complex drives branch migration. In the full resolvosome a probable DNA-RuvA(4)-RuvB(12)-RuvC(2) complex forms which resolves the HJ.

It localises to the cytoplasm. Functionally, the RuvA-RuvB-RuvC complex processes Holliday junction (HJ) DNA during genetic recombination and DNA repair, while the RuvA-RuvB complex plays an important role in the rescue of blocked DNA replication forks via replication fork reversal (RFR). RuvA specifically binds to HJ cruciform DNA, conferring on it an open structure. The RuvB hexamer acts as an ATP-dependent pump, pulling dsDNA into and through the RuvAB complex. HJ branch migration allows RuvC to scan DNA until it finds its consensus sequence, where it cleaves and resolves the cruciform DNA. The chain is Holliday junction branch migration complex subunit RuvA from Neisseria meningitidis serogroup B (strain ATCC BAA-335 / MC58).